The sequence spans 767 residues: Integrin beta-8 (767 aa).

Positions 1 to 21 (MCGSALAFLTAALLSLHNCQR) are cleaved as a signal peptide. Residues 22–681 (GPALVLGAAW…SECLSGPSYL (660 aa)) lie on the Extracellular side of the membrane. The PSI domain occupies 46–95 (RCGSANVVSCARCLQLGPECGWCVQEDFVSGGSGSERCDTVSSLISKGCP). Disulfide bonds link cysteine 47–cysteine 65, cysteine 55–cysteine 469, cysteine 58–cysteine 83, cysteine 68–cysteine 94, cysteine 211–cysteine 218, cysteine 266–cysteine 307, cysteine 407–cysteine 419, cysteine 439–cysteine 467, cysteine 471–cysteine 490, cysteine 471–cysteine 493, cysteine 481–cysteine 493, cysteine 498–cysteine 527, cysteine 510–cysteine 525, cysteine 519–cysteine 530, cysteine 532–cysteine 545, cysteine 552–cysteine 566, cysteine 560–cysteine 571, cysteine 573–cysteine 582, cysteine 584–cysteine 608, cysteine 592–cysteine 606, cysteine 600–cysteine 611, cysteine 613–cysteine 623, cysteine 626–cysteine 629, cysteine 633–cysteine 660, and cysteine 639–cysteine 656. The 239-residue stretch at 146 to 384 (PVDLYYLVDV…NLVVEAYKKI (239 aa)) folds into the VWFA domain. Residues aspartate 154 and serine 156 each contribute to the Mg(2+) site. A Ca(2+)-binding site is contributed by aspartate 193. Asparagine 233 is a glycosylation site (N-linked (GlcNAc...) asparagine). 4 residues coordinate Ca(2+): asparagine 249, aspartate 251, proline 253, and glutamate 254. A Mg(2+)-binding site is contributed by glutamate 254. A glycan (N-linked (GlcNAc...) asparagine) is linked at asparagine 402. N-linked (GlcNAc...) asparagine glycosylation is found at asparagine 421, asparagine 431, and asparagine 456. I-EGF domains follow at residues 471-494 (CENH…PQCD), 498-546 (CHFD…QYCE), 547-583 (KDDF…DRCQ), and 584-624 (CPSA…RLCE). N-linked (GlcNAc...) asparagine glycosylation occurs at asparagine 647. Residues 682–702 (RIFFIIFIVTFLIGLLKVLII) traverse the membrane as a helical segment. The Cytoplasmic portion of the chain corresponds to 703–767 (RQVILQWNNN…NAQEAFRCNF (65 aa)).

This sequence belongs to the integrin beta chain family. In terms of assembly, heterodimer of an alpha and a beta subunit. Beta-8 (ITGB8) associates with alpha-V (ITGAV) to form ITGAV:ITGB8. ITGAV:ITGB8 interacts with TGFB1.

The protein localises to the cell membrane. In terms of biological role, integrin alpha-V:beta-8 (ITGAV:ITGB8) is a receptor for fibronectin. It recognizes the sequence R-G-D in its ligands. Integrin alpha-V:beta-6 (ITGAV:ITGB6) mediates R-G-D-dependent release of transforming growth factor beta-1 (TGF-beta-1) from regulatory Latency-associated peptide (LAP), thereby playing a key role in TGF-beta-1 activation on the surface of activated regulatory T-cells (Tregs). Required during vasculogenesis. The sequence is that of Integrin beta-8 from Mus musculus (Mouse).